The primary structure comprises 430 residues: MLHMNSLWGCFLFVLLAVTGAVQGLQEDYSEYAVYRFTSDNYSTLVRDVIAPLTDDYDVWTRSNNFIDIKLPKEIGEQINDGQVIIDNMNELIQNTLPTSQMMAREQAVFENDYDFFFNEYRDLDTIYMWLDLLERSFPSLVAVEHLGRTFEGRELKALHISGNKPESNPEKKTIVITGGIHAREWISVSTVCWALYQLLNRYGSSKKETKYLDDLDFLVIPVFNPDGYAYTWSHDRLWRKNRQRTHVPQCLGIDIDHSFGFQWEKAHTHACSEEYSGETPFEAWEASAWYKYINETKGDYKIYGYIDMHSYSQEILYPYAYSCDALPRDLENLLELSYGLSKAIRSKSGRNYDVISACKDRGSDIFPGLGAGSALDFMYHHRAHWAFQLKLRDTGNHGFLLPPENIKPVGKETYAALKYFCDFLLDPEI.

Residues 1 to 24 (MLHMNSLWGCFLFVLLAVTGAVQG) form the signal peptide. A propeptide spanning residues 25–105 (LQEDYSEYAV…TLPTSQMMAR (81 aa)) is cleaved from the precursor. N41 carries an N-linked (GlcNAc...) asparagine glycan. In terms of domain architecture, Peptidase M14 spans 120–425 (EYRDLDTIYM…AALKYFCDFL (306 aa)). Residues H182 and E185 each contribute to the Zn(2+) site. Substrate is bound by residues 182-185 (HARE), R240, and 257-258 (DH). C251 and C272 are disulfide-bonded. N-linked (GlcNAc...) asparagine glycosylation occurs at N295. Zn(2+) is bound at residue H310. Substrate is bound at residue 311–312 (SY).

Belongs to the peptidase M14 family. Zn(2+) serves as cofactor. N-glycosylated.

Its subcellular location is the vacuole. It is found in the secreted. In terms of biological role, inactive carboxypeptidase that may play a role in cell wall organization and biogenesis. In Saccharomyces cerevisiae (strain ATCC 204508 / S288c) (Baker's yeast), this protein is Inactive metallocarboxypeptidase ECM14.